A 245-amino-acid polypeptide reads, in one-letter code: 1-(5-phosphoribosyl)-5-[(5-phosphoribosylamino)methylideneamino] imidazole-4-carboxamide isomerase (245 aa).

D8 (proton acceptor) is an active-site residue. The Proton donor role is filled by D129.

Belongs to the HisA/HisF family.

The protein resides in the cytoplasm. The enzyme catalyses 1-(5-phospho-beta-D-ribosyl)-5-[(5-phospho-beta-D-ribosylamino)methylideneamino]imidazole-4-carboxamide = 5-[(5-phospho-1-deoxy-D-ribulos-1-ylimino)methylamino]-1-(5-phospho-beta-D-ribosyl)imidazole-4-carboxamide. It functions in the pathway amino-acid biosynthesis; L-histidine biosynthesis; L-histidine from 5-phospho-alpha-D-ribose 1-diphosphate: step 4/9. In Rhodopseudomonas palustris (strain BisA53), this protein is 1-(5-phosphoribosyl)-5-[(5-phosphoribosylamino)methylideneamino] imidazole-4-carboxamide isomerase.